The following is a 184-amino-acid chain: UPF0149 protein PSEEN5316 (184 aa).

Belongs to the UPF0149 family.

This Pseudomonas entomophila (strain L48) protein is UPF0149 protein PSEEN5316.